Here is a 571-residue protein sequence, read N- to C-terminus: Urease subunit alpha (571 aa).

The Urease domain occupies 129–571 (GGIDTHIHFI…LPMAQRYFLF (443 aa)). Residues H134, H136, and K217 each contribute to the Ni(2+) site. Position 217 is an N6-carboxylysine (K217). H219 serves as a coordination point for substrate. 2 residues coordinate Ni(2+): H246 and H272. The active-site Proton donor is the H320. Ni(2+) is bound at residue D360.

The protein belongs to the metallo-dependent hydrolases superfamily. Urease alpha subunit family. Heterotrimer of UreA (gamma), UreB (beta) and UreC (alpha) subunits. Three heterotrimers associate to form the active enzyme. Requires Ni cation as cofactor. Post-translationally, carboxylation allows a single lysine to coordinate two nickel ions.

The protein resides in the cytoplasm. It catalyses the reaction urea + 2 H2O + H(+) = hydrogencarbonate + 2 NH4(+). Its pathway is nitrogen metabolism; urea degradation; CO(2) and NH(3) from urea (urease route): step 1/1. The sequence is that of Urease subunit alpha from Cupriavidus pinatubonensis (strain JMP 134 / LMG 1197) (Cupriavidus necator (strain JMP 134)).